We begin with the raw amino-acid sequence, 97 residues long: Co-chaperonin GroES (97 aa).

Belongs to the GroES chaperonin family. Heptamer of 7 subunits arranged in a ring. Interacts with the chaperonin GroEL.

Its subcellular location is the cytoplasm. Its function is as follows. Together with the chaperonin GroEL, plays an essential role in assisting protein folding. The GroEL-GroES system forms a nano-cage that allows encapsulation of the non-native substrate proteins and provides a physical environment optimized to promote and accelerate protein folding. GroES binds to the apical surface of the GroEL ring, thereby capping the opening of the GroEL channel. The protein is Co-chaperonin GroES of Pseudarthrobacter chlorophenolicus (strain ATCC 700700 / DSM 12829 / CIP 107037 / JCM 12360 / KCTC 9906 / NCIMB 13794 / A6) (Arthrobacter chlorophenolicus).